We begin with the raw amino-acid sequence, 491 residues long: Glycogen synthase (491 aa).

K15 is an ADP-alpha-D-glucose binding site.

It belongs to the glycosyltransferase 1 family. Bacterial/plant glycogen synthase subfamily.

The catalysed reaction is [(1-&gt;4)-alpha-D-glucosyl](n) + ADP-alpha-D-glucose = [(1-&gt;4)-alpha-D-glucosyl](n+1) + ADP + H(+). It participates in glycan biosynthesis; glycogen biosynthesis. Synthesizes alpha-1,4-glucan chains using ADP-glucose. This chain is Glycogen synthase, found in Hydrogenovibrio crunogenus (strain DSM 25203 / XCL-2) (Thiomicrospira crunogena).